Here is a 209-residue protein sequence, read N- to C-terminus: Octanoyltransferase (209 aa).

A BPL/LPL catalytic domain is found at 30-209 (DHEPEIIYLV…IQTEFNKIFK (180 aa)). Substrate contacts are provided by residues 69-76 (RGGKFTFH), 143-145 (AIG), and 156-158 (GVA). Cys174 serves as the catalytic Acyl-thioester intermediate.

Belongs to the LipB family.

The protein localises to the cytoplasm. The enzyme catalyses octanoyl-[ACP] + L-lysyl-[protein] = N(6)-octanoyl-L-lysyl-[protein] + holo-[ACP] + H(+). Its pathway is protein modification; protein lipoylation via endogenous pathway; protein N(6)-(lipoyl)lysine from octanoyl-[acyl-carrier-protein]: step 1/2. Catalyzes the transfer of endogenously produced octanoic acid from octanoyl-acyl-carrier-protein onto the lipoyl domains of lipoate-dependent enzymes. Lipoyl-ACP can also act as a substrate although octanoyl-ACP is likely to be the physiological substrate. The polypeptide is Octanoyltransferase (Rickettsia peacockii (strain Rustic)).